The chain runs to 433 residues: Trigger factor (433 aa).

Residues 163–248 (GDTVNIDFSG…VNEIKFKEVP (86 aa)) form the PPIase FKBP-type domain.

This sequence belongs to the FKBP-type PPIase family. Tig subfamily.

The protein localises to the cytoplasm. It carries out the reaction [protein]-peptidylproline (omega=180) = [protein]-peptidylproline (omega=0). Involved in protein export. Acts as a chaperone by maintaining the newly synthesized protein in an open conformation. Functions as a peptidyl-prolyl cis-trans isomerase. This chain is Trigger factor, found in Staphylococcus aureus (strain Newman).